Consider the following 278-residue polypeptide: Potassium/proton antiporter CemA (278 aa).

Transmembrane regions (helical) follow at residues 61 to 81, 155 to 175, 203 to 223, and 238 to 258; these read LIVLVVFPVVVHQVSKNFIIG, AIKNILADSISISVFILLIVL, IILFTDMFIGFHSPHGWEVVI, and FIFLFIATFPVSLDTVFKYWI.

It belongs to the CemA family.

It is found in the plastid. The protein resides in the chloroplast inner membrane. The enzyme catalyses K(+)(in) + H(+)(out) = K(+)(out) + H(+)(in). Functionally, contributes to K(+)/H(+) antiport activity by supporting proton efflux to control proton extrusion and homeostasis in chloroplasts in a light-dependent manner to modulate photosynthesis. Prevents excessive induction of non-photochemical quenching (NPQ) under continuous-light conditions. Indirectly promotes efficient inorganic carbon uptake into chloroplasts. In Cyanidium caldarium (Red alga), this protein is Potassium/proton antiporter CemA.